We begin with the raw amino-acid sequence, 174 residues long: Large ribosomal subunit protein uL15 (174 aa).

2 disordered regions span residues 1 to 57 (MKLH…QMRI) and 147 to 174 (PWVV…PQKA). The span at 21–35 (RGIGSGKGKTGGKGM) shows a compositional bias: gly residues.

This sequence belongs to the universal ribosomal protein uL15 family. In terms of assembly, part of the 50S ribosomal subunit.

In terms of biological role, binds to the 23S rRNA. The protein is Large ribosomal subunit protein uL15 of Roseiflexus sp. (strain RS-1).